The sequence spans 192 residues: Protein Syd (192 aa).

Belongs to the Syd family.

It is found in the cell inner membrane. Its function is as follows. Interacts with the SecY protein in vivo. May bind preferentially to an uncomplexed state of SecY, thus functioning either as a chelating agent for excess SecY in the cell or as a regulatory factor that negatively controls the translocase function. This chain is Protein Syd, found in Hahella chejuensis (strain KCTC 2396).